We begin with the raw amino-acid sequence, 390 residues long: Protein AC109 (390 aa).

Its subcellular location is the host cytoplasm. It is found in the host nucleus. Its function is as follows. Plays a role in the transport of the budded virion (BV) to the host nucleus and for occlusion of viral progeny. The polypeptide is Protein AC109 (ORF109) (Lepidoptera (butterflies and moths)).